The sequence spans 314 residues: Methionyl-tRNA formyltransferase (314 aa).

Residue 113-116 coordinates (6S)-5,6,7,8-tetrahydrofolate; it reads SLLP.

The protein belongs to the Fmt family.

The catalysed reaction is L-methionyl-tRNA(fMet) + (6R)-10-formyltetrahydrofolate = N-formyl-L-methionyl-tRNA(fMet) + (6S)-5,6,7,8-tetrahydrofolate + H(+). Its function is as follows. Attaches a formyl group to the free amino group of methionyl-tRNA(fMet). The formyl group appears to play a dual role in the initiator identity of N-formylmethionyl-tRNA by promoting its recognition by IF2 and preventing the misappropriation of this tRNA by the elongation apparatus. In Pseudomonas aeruginosa (strain LESB58), this protein is Methionyl-tRNA formyltransferase.